We begin with the raw amino-acid sequence, 690 residues long: Sodium-dependent phosphate transport protein 2B (690 aa).

A disordered region spans residues 1 to 42 (MAPWPELGDAQPNPDKYLEGAAGQQPTAPDKSKETNKTDNTE). Residues 1 to 100 (MAPWPELGDA…ILCFFQGIGR (100 aa)) lie on the Cytoplasmic side of the membrane. A compositionally biased stretch (basic and acidic residues) spans 30–40 (DKSKETNKTDN). A helical transmembrane segment spans residues 101-121 (LILLLGFLYFFVCSLDILSSA). The Extracellular segment spans residues 122 to 135 (FQLVGGKMAGQFFS). Residues 136 to 156 (NSSIMSNPLLGLVIGVLVTVL) traverse the membrane as a helical segment. Over 157–212 (VQSSSTSTSIVVSMVSSSLLTVRAAIPIIMGANIGTSITNTIVALMQVGDRSEFRR) the chain is Cytoplasmic. Residues 213-233 (AFAGATVHDFFNWLSVLVLLP) form a helical membrane-spanning segment. Topologically, residues 234-362 (VEVATHYLEI…IFVNFHLPDL (129 aa)) are extracellular. N-linked (GlcNAc...) asparagine glycans are attached at residues Asn-295, Asn-308, Asn-313, Asn-321, and Asn-340. Residues Cys-303 and Cys-350 are joined by a disulfide bond. Residues 363–383 (AVGTILLILSLLVLCGCLIMI) form a helical membrane-spanning segment. The Cytoplasmic portion of the chain corresponds to 384–407 (VKILGSVLKGQVATVIKKTINTDF). The chain crosses the membrane as a helical span at residues 408–428 (PFPFAWLTGYLAILVGAGMTF). Over 429–485 (IVQSSSVFTSALTPLIGIGVITIERAYPLTLGSNIGTTTTAILAALASPGNALRSSL) the chain is Extracellular. Residues 486–506 (QIALCHFFFNISGILLWYPIP) form a helical membrane-spanning segment. Over 507–525 (FTRLPIRMAKGLGNISAKY) the chain is Cytoplasmic. The chain crosses the membrane as a helical span at residues 526–546 (RWFAVFYLIIFFFLIPLTVFG). The Extracellular portion of the chain corresponds to 547–552 (LSLAGW). The chain crosses the membrane as a helical span at residues 553-573 (RVLVGVGVPVVFIIILVLCLR). Topologically, residues 574–689 (LLQSRCPRVL…ASDSKTECTA (116 aa)) are cytoplasmic.

This sequence belongs to the SLC34A transporter family. As to expression, highly expressed in lung. Also detected in pancreas, kidney, small intestine, ovary, testis, prostate and mammary gland. In lung, it is found in alveolar type II cells but not in bronchiolar epithelium.

The protein resides in the apical cell membrane. The enzyme catalyses 3 Na(+)(out) + phosphate(out) = 3 Na(+)(in) + phosphate(in). Functionally, involved in actively transporting phosphate into cells via Na(+) cotransport. The protein is Sodium-dependent phosphate transport protein 2B (SLC34A2) of Homo sapiens (Human).